The following is a 383-amino-acid chain: MSIRFLKRLRAPLYIQNAYCSKNYFYRSFIQYYSPSNGPYLKISMNKAPQSLGLCTARGDSPTNQDRMAYGYLNNLKDTTNRDSPFFYGLFDGHGGTECSEFLSTNLGKIIENQDLNDTEKILKEVHSVGGYMAGLKPPFSLRTVLQSRDEDLLWRARLYYSFLQADMDYLTNYARPSPDSAVPGAVGTVAIITSKNNLSYWESDSYIIHLAHVGDTRALLCDSRTGRAHRLTFQHHPADVEEARRLRRYNMGFSRDSFGQKRFAWVANTRSFGDGYKLKKLGVVAEPQLTSIHSLRDDWSFLTLLSDGITDVVSDDEVVDIIKLSESPQDAANNIIRYAQNVGAVDDITCLVVRLPGWKKRTINDFTKNLRLEKSAYHPRRS.

The 306-residue stretch at 51–356 (SLGLCTARGD…DDITCLVVRL (306 aa)) folds into the PPM-type phosphatase domain. The Mn(2+) site is built by D92, D308, and D347.

This sequence belongs to the PP2C family. As to quaternary structure, monomer. Mg(2+) is required as a cofactor. Requires Mn(2+) as cofactor.

It localises to the vacuole membrane. It carries out the reaction O-phospho-L-seryl-[protein] + H2O = L-seryl-[protein] + phosphate. It catalyses the reaction O-phospho-L-threonyl-[protein] + H2O = L-threonyl-[protein] + phosphate. Has a role in the regulation of vacuole fusion. This chain is Protein phosphatase 2C homolog 4 (ptc4), found in Schizosaccharomyces pombe (strain 972 / ATCC 24843) (Fission yeast).